The following is a 173-amino-acid chain: Co-chaperone protein HscB homolog (173 aa).

The region spanning 5-77 (SHFALFDLEP…SQRARYLLSL (73 aa)) is the J domain.

Belongs to the HscB family. In terms of assembly, interacts with HscA and stimulates its ATPase activity.

In terms of biological role, co-chaperone involved in the maturation of iron-sulfur cluster-containing proteins. Seems to help targeting proteins to be folded toward HscA. This is Co-chaperone protein HscB homolog from Azotobacter vinelandii (strain DJ / ATCC BAA-1303).